The primary structure comprises 256 residues: Ubiquinone/menaquinone biosynthesis C-methyltransferase UbiE (256 aa).

Positions 1 to 19 are enriched in polar residues; sequence MQNRSSSPDSSSAGNTHFG. The tract at residues 1–24 is disordered; it reads MQNRSSSPDSSSAGNTHFGFQSVP. S-adenosyl-L-methionine is bound by residues T81, D102, and 128-129; that span reads DA.

Belongs to the class I-like SAM-binding methyltransferase superfamily. MenG/UbiE family.

The enzyme catalyses a 2-demethylmenaquinol + S-adenosyl-L-methionine = a menaquinol + S-adenosyl-L-homocysteine + H(+). It carries out the reaction a 2-methoxy-6-(all-trans-polyprenyl)benzene-1,4-diol + S-adenosyl-L-methionine = a 5-methoxy-2-methyl-3-(all-trans-polyprenyl)benzene-1,4-diol + S-adenosyl-L-homocysteine + H(+). Its pathway is quinol/quinone metabolism; menaquinone biosynthesis; menaquinol from 1,4-dihydroxy-2-naphthoate: step 2/2. It functions in the pathway cofactor biosynthesis; ubiquinone biosynthesis. In terms of biological role, methyltransferase required for the conversion of demethylmenaquinol (DMKH2) to menaquinol (MKH2) and the conversion of 2-polyprenyl-6-methoxy-1,4-benzoquinol (DDMQH2) to 2-polyprenyl-3-methyl-6-methoxy-1,4-benzoquinol (DMQH2). This chain is Ubiquinone/menaquinone biosynthesis C-methyltransferase UbiE, found in Bordetella avium (strain 197N).